The following is a 315-amino-acid chain: Ribosomal RNA large subunit methyltransferase F (315 aa).

The protein belongs to the methyltransferase superfamily. METTL16/RlmF family.

It localises to the cytoplasm. It catalyses the reaction adenosine(1618) in 23S rRNA + S-adenosyl-L-methionine = N(6)-methyladenosine(1618) in 23S rRNA + S-adenosyl-L-homocysteine + H(+). Specifically methylates the adenine in position 1618 of 23S rRNA. The protein is Ribosomal RNA large subunit methyltransferase F of Aeromonas salmonicida (strain A449).